Here is a 313-residue protein sequence, read N- to C-terminus: Protein FixB (313 aa).

255–283 is an FAD binding site; sequence LYLAVGISGQIQHMVGANASQTIFAINKD.

It belongs to the ETF alpha-subunit/FixB family. In terms of assembly, heterodimer of FixA and FixB.

It functions in the pathway amine and polyamine metabolism; carnitine metabolism. Functionally, required for anaerobic carnitine reduction. May bring reductant to CaiA. This Escherichia coli O157:H7 protein is Protein FixB.